The following is a 471-amino-acid chain: Anthocyanidin 3-O-glucosyltransferase (471 aa).

Residue His24 is the Proton acceptor of the active site. His24 is an an anthocyanidin binding site. Catalysis depends on Asp130, which acts as the Charge relay. Thr152 contributes to the UDP-alpha-D-glucose binding site. His161 provides a ligand contact to an anthocyanidin. Ala352, Gln354, His369, Trp372, Ser374, and Glu377 together coordinate UDP-alpha-D-glucose. Gly392 serves as a coordination point for an anthocyanidin. The UDP-alpha-D-glucose site is built by Asp393 and Gln394.

This sequence belongs to the UDP-glycosyltransferase family.

The catalysed reaction is an anthocyanidin + UDP-alpha-D-glucose + H(+) = an anthocyanidin 3-O-beta-D-glucoside + UDP. Its pathway is pigment biosynthesis; anthocyanin biosynthesis. Functionally, in the presence of other necessary color factors, this glycosylation reaction allows the accumulation of anthocyanin pigments. The polypeptide is Anthocyanidin 3-O-glucosyltransferase (BZ1) (Zea mays (Maize)).